A 536-amino-acid chain; its full sequence is SNW domain-containing protein 1 (536 aa).

Residues 1 to 44 are disordered; that stretch reads MALTSFLPAPTQLSQDQLEAEERARSQRSLQTSLVSSRREPPPY. A2 bears the N-acetylalanine mark. Residue S14 is modified to Phosphoserine. Polar residues predominate over residues 27–36; that stretch reads QRSLQTSLVS. The tract at residues 59–79 is interaction with PPIL1; sequence GDGGAFPEIHVAQYPLDMGRK. Residues K81, K97, K115, K122, K141, K158, and K170 each participate in a glycyl lysine isopeptide (Lys-Gly) (interchain with G-Cter in SUMO2) cross-link. An SNW region spans residues 174–339; it reads AQYIRYTPSQ…KARERRAGIK (166 aa). Phosphoserine occurs at positions 182 and 190. K193 is covalently cross-linked (Glycyl lysine isopeptide (Lys-Gly) (interchain with G-Cter in SUMO2)). A disordered region spans residues 212–233; the sequence is FKINKKIPRGPPSPPAPVMHSP. A phosphoserine mark is found at S224, S232, and S234. Glycyl lysine isopeptide (Lys-Gly) (interchain with G-Cter in SUMO2) cross-links involve residues K240, K258, K286, K339, K344, K416, and K441. Residues 311-386 are disordered; that stretch reads KMAQKEKEKH…RSKLQRNENR (76 aa). At S446 the chain carries Phosphoserine. Residue K452 forms a Glycyl lysine isopeptide (Lys-Gly) (interchain with G-Cter in SUMO2) linkage. 2 stretches are compositionally biased toward basic and acidic residues: residues 467–489 and 503–530; these read IKTN…RGRE and KFLE…EHEG. The disordered stretch occupies residues 467–536; it reads IKTNRFVPDK…EHEGKKRRKE (70 aa). S479 and S481 each carry phosphoserine. K509 participates in a covalent cross-link: Glycyl lysine isopeptide (Lys-Gly) (interchain with G-Cter in SUMO2).

It belongs to the SNW family. As to quaternary structure, identified in the spliceosome C complex. Associates with U4/U6-U5 tri-small nuclear ribonucleoproteins (U4/U6-U5 tri-snRNPs). Component of the minor spliceosome, which splices U12-type introns. Interacts with SKI, SMAD2,SMAD3, RBPJ, RB1, PABPN1, MAGEA1, SIRT1, FOXN3, U2AF2, PPIL1, DAXX and ATP1B4. Interacts with VDR and RXRA; preferentially associates with VDR:RXRA heterodimers. Interacts with NCOR2. Interacts with MAML1. Interacts with NOTCH1 NICD; the interaction involves multimerized NOTCH1 NICD. Forms a complex with NOTCH1 NICD and MAML1; the association is dissociated by RBPJ. Associates with positive transcription elongation factor b (P-TEFb). Component of the SNARP complex which consists at least of SNIP1, SNW1, THRAP3, BCLAF1 and PNN.

The protein localises to the nucleus. In terms of biological role, involved in pre-mRNA splicing as component of the spliceosome. As a component of the minor spliceosome, involved in the splicing of U12-type introns in pre-mRNAs. Required in the specific splicing of CDKN1A pre-mRNA; the function probably involves the recruitment of U2AF2 to the mRNA. May recruit PPIL1 to the spliceosome. May be involved in cyclin-D1/CCND1 mRNA stability through the SNARP complex which associates with both the 3'end of the CCND1 gene and its mRNA. Involved in transcriptional regulation. Modulates TGF-beta-mediated transcription via association with SMAD proteins, MYOD1-mediated transcription via association with PABPN1, RB1-mediated transcriptional repression, and retinoid-X receptor (RXR)- and vitamin D receptor (VDR)-dependent gene transcription in a cell line-specific manner probably involving coactivators NCOA1 and GRIP1. Is involved in NOTCH1-mediated transcriptional activation. Binds to multimerized forms of Notch intracellular domain (NICD) and is proposed to recruit transcriptional coactivators such as MAML1 to form an intermediate preactivation complex which associates with DNA-bound CBF-1/RBPJ to form a transcriptional activation complex by releasing SNW1 and redundant NOTCH1 NICD. In Mus musculus (Mouse), this protein is SNW domain-containing protein 1 (Snw1).